We begin with the raw amino-acid sequence, 231 residues long: NADH-ubiquinone oxidoreductase chain 4 (231 aa).

6 helical membrane passes run 1 to 21, 34 to 54, 63 to 85, 89 to 111, 118 to 138, and 156 to 176; these read PIAG…YGII, MFLP…LTCL, IAYS…TPWG, GMTL…NTTY, ILIL…WWLL, and LLIM…LGLS.

The protein belongs to the complex I subunit 4 family.

The protein localises to the mitochondrion membrane. The catalysed reaction is a ubiquinone + NADH + 5 H(+)(in) = a ubiquinol + NAD(+) + 4 H(+)(out). Functionally, core subunit of the mitochondrial membrane respiratory chain NADH dehydrogenase (Complex I) that is believed to belong to the minimal assembly required for catalysis. Complex I functions in the transfer of electrons from NADH to the respiratory chain. The immediate electron acceptor for the enzyme is believed to be ubiquinone. The polypeptide is NADH-ubiquinone oxidoreductase chain 4 (MT-ND4) (Calloselasma rhodostoma (Malayan pit viper)).